The chain runs to 88 residues: Gene 30 protein (88 aa).

In Mycobacterium (Mycobacteriophage D29), this protein is Gene 30 protein (30).